The primary structure comprises 104 residues: Protamine-3 (104 aa).

Residues 1–104 form a disordered region; the sequence is MGSRCAKLST…PSPEPKQKHS (104 aa). Acidic residues predominate over residues 45-70; that stretch reads EGEEEEEDEEDEEEEDDDEEDEEEEQ. Serine 96 is modified (phosphoserine).

It belongs to the protamine P3 family. As to expression, testis.

Its subcellular location is the nucleus. The protein localises to the chromosome. Its function is as follows. Protamines substitute for histones in the chromatin of sperm during the haploid phase of spermatogenesis. They compact sperm DNA into a highly condensed, stable and inactive complex. In Rattus norvegicus (Rat), this protein is Protamine-3 (Prm3).